The sequence spans 360 residues: MAKSPEVEHPVKAFGWAARDPSGVLSPFNFSRRATGEHDVQFKVLYCGICHSDLHMIKNEWGFTKYPIVPGHEIVGVVTEVGSKVEKFKVGDKVGVGCLVGSCRKCDMCSDDLENYCPGQILTYSAAYTDGTTTYGGYSNLMVSDEHFVICWPENLPMDIGAPLLCAGITTYSPLRYFGLDKPGTHVGVVGLGGLGHVAVKFAKAFGAKVTVISTSESKKQEAIEKLGADAFLVSRDPEQMQGAAGSMDGIIDTVSAVHPVLPLVNLLKSQGKLIMVGAPEKPLELPVFPLLAGRRIIAGSAIGGLKETQEMIDFAAKNNILPDVELVPMDYVNTAMERLLKADVKYRFVIDIGNTLKSA.

Positions 23–351 (GVLSPFNFSR…KADVKYRFVI (329 aa)) constitute an Enoyl reductase (ER) domain. Residue cysteine 50 coordinates Zn(2+). An alcohol is bound at residue serine 52. Serine 52 is a binding site for NADP(+). Zn(2+)-binding residues include aspartate 53, histidine 72, glutamate 73, cysteine 103, cysteine 106, cysteine 109, cysteine 117, and cysteine 166. Histidine 72 serves as a coordination point for an alcohol. The NADP(+) site is built by leucine 192, glycine 194, leucine 195, serine 214, threonine 215, serine 216, lysine 219, lysine 220, valine 277, alanine 279, serine 301, and arginine 348.

Belongs to the zinc-containing alcohol dehydrogenase family. Class-P subfamily. As to quaternary structure, homodimer. The cofactor is Zn(2+). As to expression, mainly expressed in young roots and, to a lower extent, in stems and leaves.

The protein localises to the cytoplasm. The enzyme catalyses (E)-cinnamyl alcohol + NADP(+) = (E)-cinnamaldehyde + NADPH + H(+). Alcohol dehydrogenase that catalyzes the conversion of (E)-cinnamyl alcohol to (E)-cinnamaldehyde. The polypeptide is Cinnamyl alcohol dehydrogenase 2 (Rauvolfia serpentina (Serpentine wood)).